The primary structure comprises 42 residues: Small, acid-soluble spore protein L (42 aa).

The disordered stretch occupies residues 1–42; the sequence is MKKKDKGRLTGGVTPQGDLEGNTHNDPKTELEERAKKSNTKR. Basic and acidic residues predominate over residues 21–36; sequence GNTHNDPKTELEERAK.

It localises to the spore core. This is Small, acid-soluble spore protein L (sspL) from Bacillus subtilis (strain 168).